The following is a 462-amino-acid chain: Cysteine--tRNA ligase (462 aa).

C27 contributes to the Zn(2+) binding site. A 'HIGH' region motif is present at residues 29–39 (PTVYNYIHVGN). Residues C209, H234, and E238 each contribute to the Zn(2+) site. The 'KMSKS' region signature appears at 266–270 (KMSKS). K269 contacts ATP.

The protein belongs to the class-I aminoacyl-tRNA synthetase family. Monomer. The cofactor is Zn(2+).

It is found in the cytoplasm. It carries out the reaction tRNA(Cys) + L-cysteine + ATP = L-cysteinyl-tRNA(Cys) + AMP + diphosphate. The sequence is that of Cysteine--tRNA ligase from Finegoldia magna (strain ATCC 29328 / DSM 20472 / WAL 2508) (Peptostreptococcus magnus).